The sequence spans 649 residues: Cysteine-rich receptor-like protein kinase 2 (649 aa).

A signal peptide spans 1–29; that stretch reads MKKEPVHILPLYLPCLLMFLLSSLRQITG. The Extracellular segment spans residues 30–258; it reads DARARAVKVT…IPRNGRSRGS (229 aa). Gnk2-homologous domains are found at residues 33-134 and 139-245; these read ARAV…NYSF and KGPE…DQDF. N-linked (GlcNAc...) asparagine glycosylation is found at Asn47, Asn131, Asn149, Asn154, and Asn214. Residues 259–279 form a helical membrane-spanning segment; sequence VVVIVVSVLSSVVVFMIGVAV. The Cytoplasmic portion of the chain corresponds to 280-649; that stretch reads SVYICKRRTI…TVSQSSFYGR (370 aa). In terms of domain architecture, Protein kinase spans 325-608; sequence FDNANKLGQG…HMLKNKEEVL (284 aa). Residues 331 to 339 and Lys353 contribute to the ATP site; that span reads LGQGGFGTV. Tyr398 carries the post-translational modification Phosphotyrosine. Asp450 acts as the Proton acceptor in catalysis. 2 positions are modified to phosphoserine: Ser454 and Ser483. Phosphothreonine occurs at positions 484 and 489. Residue Tyr497 is modified to Phosphotyrosine.

This sequence belongs to the protein kinase superfamily. Ser/Thr protein kinase family. CRK subfamily.

It localises to the membrane. It carries out the reaction L-seryl-[protein] + ATP = O-phospho-L-seryl-[protein] + ADP + H(+). It catalyses the reaction L-threonyl-[protein] + ATP = O-phospho-L-threonyl-[protein] + ADP + H(+). This chain is Cysteine-rich receptor-like protein kinase 2 (CRK2), found in Arabidopsis thaliana (Mouse-ear cress).